The chain runs to 268 residues: MDFLTAIVLGVVQGVSEWLPISSKTQVMFVSQLLLSATPELAYSLGLFLEAASVLAALIYFRLVYLKILRGFLGDAEGRKWLTYVIVTTAATGAVGIPLYMAAKRYLLLGASAGWLMVVLGVAVIFNAVLLQRARSVAGLKTFDDMTLGHMALVGLAQALSVLPGISRSGITTTTLLLLGYRPDEAFKSSFVLVPIAGLGATALAYLSEGGAVATPEVITAMLIGLVVSLVTIKALLEFAKSKHVTLVNIVVGTLAIAGGITRILLSS.

Helical transmembrane passes span 41 to 61, 81 to 101, 106 to 126, 146 to 166, 191 to 211, 213 to 233, and 245 to 265; these read LAYS…LIYF, WLTY…PLYM, YLLL…AVIF, MTLG…LPGI, FVLV…SEGG, VATP…LVTI, and VTLV…TRIL.

Belongs to the UppP family.

It is found in the cell membrane. The catalysed reaction is di-trans,octa-cis-undecaprenyl diphosphate + H2O = di-trans,octa-cis-undecaprenyl phosphate + phosphate + H(+). Catalyzes the dephosphorylation of undecaprenyl diphosphate (UPP). In Pyrobaculum islandicum (strain DSM 4184 / JCM 9189 / GEO3), this protein is Undecaprenyl-diphosphatase.